A 314-amino-acid polypeptide reads, in one-letter code: Very long chain fatty acid elongase 4 (314 aa).

Residue N20 is glycosylated (N-linked (GlcNAc...) asparagine). 7 helical membrane passes run 42-62 (LMQS…FVWL), 78-98 (VLII…RELF), 127-147 (ALWW…FFIL), 165-185 (MFTL…FFGA), 188-208 (NSFI…GPWI), 217-237 (YLTM…ALSL), and 247-267 (MHWA…NFYI). The disordered stretch occupies residues 275 to 314 (KPKAGKTAMNGISANGVSKSEKQLMIENGKKQKNGKAKGD). Residues 293–304 (KSEKQLMIENGK) show a composition bias toward basic and acidic residues. Residues 305-314 (KQKNGKAKGD) show a composition bias toward basic residues. The Di-lysine motif motif lies at 310–314 (KAKGD).

The protein belongs to the ELO family. ELOVL4 subfamily. As to quaternary structure, oligomer. N-glycosylated. As to expression, expressed in the retina and at much lower level in the brain. Ubiquitous, highest expression in thymus, followed by testis, small intestine, ovary, and prostate. Little or no expression in heart, lung, liver, or leukocates.

The protein localises to the endoplasmic reticulum membrane. It catalyses the reaction a very-long-chain acyl-CoA + malonyl-CoA + H(+) = a very-long-chain 3-oxoacyl-CoA + CO2 + CoA. The catalysed reaction is tetracosanoyl-CoA + malonyl-CoA + H(+) = 3-oxohexacosanoyl-CoA + CO2 + CoA. It carries out the reaction hexacosanoyl-CoA + malonyl-CoA + H(+) = 3-oxooctacosanyol-CoA + CO2 + CoA. The enzyme catalyses octacosanoyl-CoA + malonyl-CoA + H(+) = 3-oxo-triacontanoyl-CoA + CO2 + CoA. It catalyses the reaction triacontanoyl-CoA + malonyl-CoA + H(+) = 3-oxo-dotriacontanoyl-CoA + CO2 + CoA. The catalysed reaction is (19Z,22Z,25Z,28Z,31Z)-tetratriacontapentaenoyl-CoA + malonyl-CoA + H(+) = 3-oxo-(21Z,24Z,27Z,30Z,33Z)-hexatriacontapentaenoyl-CoA + CO2 + CoA. It carries out the reaction (4Z,7Z,10Z,13Z,16Z,19Z)-docosahexaenoyl-CoA + malonyl-CoA + H(+) = 3-oxo-(6Z,9Z,12Z,15Z,18Z,21Z)-tetracosahexaenoyl-CoA + CO2 + CoA. The enzyme catalyses (7Z,10Z,13Z,16Z)-docosatetraenoyl-CoA + malonyl-CoA + H(+) = (9Z,12Z,15Z,18Z)-3-oxotetracosatetraenoyl-CoA + CO2 + CoA. It catalyses the reaction (11Z,14Z,17Z,20Z,23Z)-hexacosapentaenoyl-CoA + malonyl-CoA + H(+) = 3-oxo-(13Z,16Z,19Z,22Z,25Z)-octacosapentaenoyl-CoA + CO2 + CoA. The catalysed reaction is (13Z,16Z,19Z,22Z,25Z)-octacosapentaenoyl-CoA + malonyl-CoA + H(+) = 3-oxo-(15Z,18Z,21Z,24Z,27Z)-triacontapentaenoyl-CoA + CO2 + CoA. It carries out the reaction (15Z,18Z,21Z,24Z,27Z)-triacontapentaenoyl-CoA + malonyl-CoA + H(+) = 3-oxo-(17Z,20Z,23Z,26Z,29Z)-dotriacontapentaenoyl-CoA + CO2 + CoA. The enzyme catalyses (17Z,20Z,23Z,26Z,29Z)-dotriacontapentaenoyl-CoA + malonyl-CoA + H(+) = 3-oxo-(19Z,22Z,25Z,28Z,31Z)-tetratriacontapentaenoyl-CoA + CO2 + CoA. It catalyses the reaction (21Z,24Z,27Z,30Z,33Z)-hexatriacontapentaenoyl-CoA + malonyl-CoA + H(+) = 3-oxo-(23Z,26Z,29Z,32Z,35Z)-octatriacontapentaenoyl-CoA + CO2 + CoA. The catalysed reaction is (11Z,14Z,17Z,20Z)-hexacosatetraenoyl-CoA + malonyl-CoA + H(+) = (13Z,16Z,19Z,22Z)-3-oxooctacosatetraenoyl-CoA + CO2 + CoA. It carries out the reaction (13Z,16Z,19Z,22Z)-octacosatetraenoyl-CoA + malonyl-CoA + H(+) = 3-oxo-(15Z,18Z,21Z,24Z)-triacontatetraenoyl-CoA + CO2 + CoA. The enzyme catalyses (15Z,18Z,21Z,24Z)-triacontatetraenoyl-CoA + malonyl-CoA + H(+) = 3-oxo-(17Z,20Z,23Z,26Z)-dotriacontatetraenoyl-CoA + CO2 + CoA. It catalyses the reaction (17Z,20Z,23Z,26Z)-dotriacontatetraenoyl-CoA + malonyl-CoA + H(+) = 3-oxo-(19Z,22Z,25Z,28Z)-tetratriacontatetraenoyl-CoA + CO2 + CoA. The catalysed reaction is (19Z,22Z,25Z,28Z)-tetratriacontatetraenoyl-CoA + malonyl-CoA + H(+) = 3-oxo-(21Z,24Z,27Z,30Z)-hexatriacontatetraenoyl-CoA + CO2 + CoA. It carries out the reaction (21Z,24Z,27Z,30Z)-hexatriacontatetraenoyl-CoA + malonyl-CoA + H(+) = 3-oxo-(23Z,26Z,29Z,32Z)-octatriacontatetraenoyl-CoA + CO2 + CoA. The enzyme catalyses (6Z,9Z,12Z,15Z,18Z,21Z)-tetracosahexaenoyl-CoA + malonyl-CoA + H(+) = 3-oxo-(8Z,11Z,14Z,17Z,20Z,23Z)-hexacosahexaenoyl-CoA + CO2 + CoA. It catalyses the reaction (8Z,11Z,14Z,17Z,20Z,23Z)-hexacosahexaenoyl-CoA + malonyl-CoA + H(+) = 3-oxo-(10Z,13Z,16Z,19Z,22Z,25Z)-octacosahexaenoyl-CoA + CO2 + CoA. The catalysed reaction is (10Z,13Z,16Z,19Z,22Z,25Z)-octacosahexaenoyl-CoA + malonyl-CoA + H(+) = 3-oxo-(12Z,15Z,18Z,21Z,24Z,27Z)-triacontahexaenoyl-CoA + CO2 + CoA. It carries out the reaction (12Z,15Z,18Z,21Z,24Z,27Z)-triacontahexaenoyl-CoA + malonyl-CoA + H(+) = 3-oxo-(14Z,17Z,20Z,23Z,26Z,29Z)-dotriacontahexaenoyl-CoA + CO2 + CoA. The enzyme catalyses (14Z,17Z,20Z,23Z,26Z,29Z)-dotriacontahexaenoyl-CoA + malonyl-CoA + H(+) = 3-oxo-(16Z,19Z,22Z,25Z,28Z,31Z)-tetratriacontahexaenoyl-CoA + CO2 + CoA. It catalyses the reaction (16Z,19Z,22Z,25Z,28Z,31Z)-tetratriacontahexaenoyl-CoA + malonyl-CoA + H(+) = 3-oxo-(18Z,21Z,24Z,27Z,30Z,33Z)-hexatriacontahexaenoyl-CoA + CO2 + CoA. The catalysed reaction is (9Z,12Z,15Z,18Z,21Z)-tetracosapentaenoyl-CoA + malonyl-CoA + H(+) = 3-oxo-(11Z,14Z,17Z,20Z,23Z)-hexacosapentaenoyl-CoA + CO2 + CoA. The protein operates within lipid metabolism; fatty acid biosynthesis. Catalyzes the first and rate-limiting reaction of the four reactions that constitute the long-chain fatty acids elongation cycle. This endoplasmic reticulum-bound enzymatic process allows the addition of 2 carbons to the chain of long- and very long-chain fatty acids (VLCFAs) per cycle. Condensing enzyme that catalyzes the synthesis of very long chain saturated (VLC-SFA) and polyunsaturated (PUFA) fatty acids that are involved in multiple biological processes as precursors of membrane lipids and lipid mediators. May play a critical role in early brain and skin development. This is Very long chain fatty acid elongase 4 from Homo sapiens (Human).